A 328-amino-acid chain; its full sequence is uncharacterized protein (328 aa).

The Bro-N domain maps to 3–126; the sequence is RVKIGEFKFG…EVIPQVLCTG (124 aa).

This is an uncharacterized protein from Autographa californica nuclear polyhedrosis virus (AcMNPV).